A 699-amino-acid polypeptide reads, in one-letter code: UvrABC system protein B (699 aa).

Residues 35–188 (ERINNGEKDV…DHLLRKFVSM (154 aa)) enclose the Helicase ATP-binding domain. Residue 48-55 (GATGTGKS) participates in ATP binding. A Beta-hairpin motif is present at residues 101 to 124 (YYDYYQPEAYVAQTDTFIEKDSSI). One can recognise a Helicase C-terminal domain in the interval 438–604 (QIDDLLGEIR…PLRKKIADIT (167 aa)). The UVR domain occupies 654–689 (VGLIEQLTEQMHGAAAELQFEVAARIRDEVKELKRE).

This sequence belongs to the UvrB family. As to quaternary structure, forms a heterotetramer with UvrA during the search for lesions. Interacts with UvrC in an incision complex.

Its subcellular location is the cytoplasm. Functionally, the UvrABC repair system catalyzes the recognition and processing of DNA lesions. A damage recognition complex composed of 2 UvrA and 2 UvrB subunits scans DNA for abnormalities. Upon binding of the UvrA(2)B(2) complex to a putative damaged site, the DNA wraps around one UvrB monomer. DNA wrap is dependent on ATP binding by UvrB and probably causes local melting of the DNA helix, facilitating insertion of UvrB beta-hairpin between the DNA strands. Then UvrB probes one DNA strand for the presence of a lesion. If a lesion is found the UvrA subunits dissociate and the UvrB-DNA preincision complex is formed. This complex is subsequently bound by UvrC and the second UvrB is released. If no lesion is found, the DNA wraps around the other UvrB subunit that will check the other stand for damage. In Paenarthrobacter aurescens (strain TC1), this protein is UvrABC system protein B.